The following is a 207-amino-acid chain: Large ribosomal subunit protein bL25 (207 aa).

A disordered region spans residues methionine 1 to arginine 20.

Belongs to the bacterial ribosomal protein bL25 family. CTC subfamily. As to quaternary structure, part of the 50S ribosomal subunit; part of the 5S rRNA/L5/L18/L25 subcomplex. Contacts the 5S rRNA. Binds to the 5S rRNA independently of L5 and L18.

Functionally, this is one of the proteins that binds to the 5S RNA in the ribosome where it forms part of the central protuberance. This Xylella fastidiosa (strain M23) protein is Large ribosomal subunit protein bL25.